The sequence spans 201 residues: MDSLSPKRAAVLAFLQQQAQAGLAPSLAEIAQAFGFASRNAAQKHVQALAEAGLIELVPNRKRGIRVPGGAGPDALLALPVLGRVAAGVPIGADIGLDRQLWLDRSLFALRPDYLLQVQGDSMIDDGILEGDLVGVQRSSDARNGQIVVARVDGEITIKRLERSADAIRLLPRNPAHAPIVVAADADFAIEGVYCGLIRQG.

The segment at residues L27–Q47 is a DNA-binding region (H-T-H motif). Catalysis depends on for autocatalytic cleavage activity residues S122 and K159.

Belongs to the peptidase S24 family. As to quaternary structure, homodimer.

It carries out the reaction Hydrolysis of Ala-|-Gly bond in repressor LexA.. Its function is as follows. Represses a number of genes involved in the response to DNA damage (SOS response), including recA and lexA. In the presence of single-stranded DNA, RecA interacts with LexA causing an autocatalytic cleavage which disrupts the DNA-binding part of LexA, leading to derepression of the SOS regulon and eventually DNA repair. The sequence is that of LexA repressor 1 from Xanthomonas campestris pv. campestris (strain ATCC 33913 / DSM 3586 / NCPPB 528 / LMG 568 / P 25).